A 334-amino-acid polypeptide reads, in one-letter code: Glycerol-3-phosphate dehydrogenase [NAD(P)+] (334 aa).

Residues Trp-13, Arg-33, and Lys-106 each coordinate NADPH. Positions 106, 137, and 139 each coordinate sn-glycerol 3-phosphate. Position 141 (Ala-141) interacts with NADPH. Sn-glycerol 3-phosphate contacts are provided by Lys-192, Asp-245, Ser-255, Arg-256, and Asn-257. Lys-192 acts as the Proton acceptor in catalysis. Arg-256 serves as a coordination point for NADPH. Residues Val-280 and Glu-282 each coordinate NADPH.

This sequence belongs to the NAD-dependent glycerol-3-phosphate dehydrogenase family.

It is found in the cytoplasm. It catalyses the reaction sn-glycerol 3-phosphate + NAD(+) = dihydroxyacetone phosphate + NADH + H(+). It carries out the reaction sn-glycerol 3-phosphate + NADP(+) = dihydroxyacetone phosphate + NADPH + H(+). It participates in membrane lipid metabolism; glycerophospholipid metabolism. Its function is as follows. Catalyzes the reduction of the glycolytic intermediate dihydroxyacetone phosphate (DHAP) to sn-glycerol 3-phosphate (G3P), the key precursor for phospholipid synthesis. In Chlamydia felis (strain Fe/C-56) (Chlamydophila felis), this protein is Glycerol-3-phosphate dehydrogenase [NAD(P)+].